The primary structure comprises 427 residues: Zinc finger protein 134 (427 aa).

Residue Lys20 forms a Glycyl lysine isopeptide (Lys-Gly) (interchain with G-Cter in SUMO2) linkage. Residues Leu50 to His72 form a C2H2-type 1 zinc finger. The C2H2-type 2; degenerate zinc-finger motif lies at His78–Tyr100. Residues Lys135 and Lys139 each participate in a glycyl lysine isopeptide (Lys-Gly) (interchain with G-Cter in SUMO2) cross-link. 9 C2H2-type zinc fingers span residues Tyr176 to His198, Tyr204 to His226, Tyr232 to His254, Tyr260 to His282, Tyr288 to His310, Tyr316 to His338, Phe344 to His366, Phe372 to His394, and Tyr400 to His422.

This sequence belongs to the krueppel C2H2-type zinc-finger protein family.

The protein resides in the nucleus. May be involved in transcriptional regulation. The chain is Zinc finger protein 134 (ZNF134) from Homo sapiens (Human).